The following is a 699-amino-acid chain: Protein STRUBBELIG-RECEPTOR FAMILY 5 (699 aa).

Residues 1–22 form the signal peptide; that stretch reads MTQKLVRLVIVSLAITVTLLQA. Topologically, residues 23–273 are extracellular; that stretch reads KTDNQEVSAL…DGGGITAGTG (251 aa). LRR repeat units lie at residues 93–115, 116–136, 139–161, 163–186, and 187–209; these read SLTTFDLSKNNLKGNIPYQLPPN, IANLDFSENELDGNVPYSLSQ, NLQSINLGQNKLNGELPDMFQKL, KLETLDFSLNKLSGKLPQSFANLT, and SLKKLHLQDNRFTGDINVLRNLA. Asn184 carries an N-linked (GlcNAc...) asparagine glycan. A disordered region spans residues 239 to 263; sequence NDWSTETAPPPPPGVKYGRKSSGSK. A helical transmembrane segment spans residues 274–294; the sequence is MVIAGACLGVLVLIIVLIALV. The Cytoplasmic segment spans residues 295 to 699; it reads SKKKSSLSPH…SYRAHDDYDY (405 aa). At Ser368 the chain carries Phosphoserine. In terms of domain architecture, Protein kinase spans 404-675; the sequence is FSPGNLLGEG…SEVVEALVRM (272 aa). ATP contacts are provided by residues 410 to 418 and Lys432; that span reads LGEGSIGRV.

This sequence belongs to the protein kinase superfamily. Ser/Thr protein kinase family. As to expression, expressed in leaves and flowers.

The protein localises to the membrane. The protein is Protein STRUBBELIG-RECEPTOR FAMILY 5 (SRF5) of Arabidopsis thaliana (Mouse-ear cress).